The chain runs to 250 residues: Putative B3 domain-containing protein At4g03170 (250 aa).

The segment covering 1–12 has biased composition (polar residues); sequence MANSTGKPTSST. Residues 1–90 form a disordered region; the sequence is MANSTGKPTS…EKNQPKRFKK (90 aa). Over residues 34 to 56 the composition is skewed to acidic residues; the sequence is DREEDIDDEDDIDDEVIDDEDYE. A compositionally biased stretch (basic and acidic residues) spans 72–84; it reads QSREREEETEKNQ. Positions 137-245 form a DNA-binding region, TF-B3; it reads KKQLMSSDVD…KLCFAIHYVK (109 aa).

It is found in the nucleus. This Arabidopsis thaliana (Mouse-ear cress) protein is Putative B3 domain-containing protein At4g03170.